The sequence spans 155 residues: RING finger protein 122 (155 aa).

Residues V40–I60 traverse the membrane as a helical segment. The RING-type; atypical zinc finger occupies C93–N134.

The protein localises to the golgi apparatus. The protein resides in the endoplasmic reticulum. It is found in the membrane. Functionally, may induce necrosis and apoptosis. May play a role in cell viability. The chain is RING finger protein 122 (Rnf122) from Mus musculus (Mouse).